Consider the following 201-residue polypeptide: Heat shock protein beta-1 (201 aa).

Residue arginine 12 is modified to Omega-N-methylarginine. Position 15 is a phosphoserine; by MAPKAPK2 and MAPKAPK3 (serine 15). Serine 27 is subject to Phosphoserine. Residues 68-201 (AYNRALSRQL…AGKSEQPENK (134 aa)) are interaction with TGFB1I1. In terms of domain architecture, sHSP spans 72–180 (ALSRQLSSGV…QSAEITIPVT (109 aa)). 2 positions are modified to phosphoserine; by MAPKAPK2, MAPKAPK3 and MAPKAPK5: serine 74 and serine 78. A phosphoserine mark is found at serine 79, serine 82, and serine 94. Residue lysine 119 is modified to N6-acetyllysine. Residue threonine 170 is modified to Phosphothreonine. Residues serine 172 and serine 195 each carry the phosphoserine modification.

This sequence belongs to the small heat shock protein (HSP20) family. Homooligomer. Homodimer; becomes monomeric upon activation. Heterooligomer; with HSPB6. Associates with alpha- and beta-tubulin. Interacts with TGFB1I1. Interacts with CRYAB. Interacts with HSPB8. Interacts with HSPBAP1. In terms of processing, phosphorylated upon exposure to protein kinase C activators and heat shock. Phosphorylation by MAPKAPK2 and MAPKAPK3 in response to stress dissociates HSPB1 from large small heat-shock protein (sHsps) oligomers and impairs its chaperone activity and ability to protect against oxidative stress effectively. Phosphorylation by MAPKAPK5 in response to PKA stimulation induces F-actin rearrangement.

The protein resides in the cytoplasm. It is found in the nucleus. It localises to the cytoskeleton. Its subcellular location is the spindle. In terms of biological role, small heat shock protein which functions as a molecular chaperone probably maintaining denatured proteins in a folding-competent state. Plays a role in stress resistance and actin organization. Through its molecular chaperone activity may regulate numerous biological processes including the phosphorylation and the axonal transport of neurofilament proteins. The sequence is that of Heat shock protein beta-1 (HSPB1) from Bos taurus (Bovine).